The chain runs to 269 residues: Histone doublet H2B-H2A (269 aa).

Positions 1 to 168 (MATQKETTRK…LAGNAARDSK (168 aa)) are histone fold. Residues 210-249 (RKKARKTTEKEASSPKKKAAPKKKKAASKQKKSLSDKELA) are disordered. A compositionally biased stretch (basic residues) spans 224–241 (PKKKAAPKKKKAASKQKK).

Its subcellular location is the host nucleus. The protein resides in the host cytoplasm. It is found in the virion. Functionally, histone-like protein that is recruited to viral factories during viral replication and participates in viral DNA packaging and virion production probably by forming unstable nucleosome-like particles. May compact the viral DNA. The chain is Histone doublet H2B-H2A from Melbournevirus (MelV).